A 127-amino-acid polypeptide reads, in one-letter code: Putative platinum sensitivity protein 1 (127 aa).

This chain is Putative platinum sensitivity protein 1 (PSY1), found in Saccharomyces cerevisiae (strain ATCC 204508 / S288c) (Baker's yeast).